We begin with the raw amino-acid sequence, 227 residues long: Cytochrome c oxidase subunit 2 (227 aa).

Residues Met-1 to Ser-14 are Mitochondrial intermembrane-facing. A helical transmembrane segment spans residues Pro-15–Met-45. Residues Leu-46 to Gln-59 are Mitochondrial matrix-facing. The helical transmembrane segment at Glu-60–Met-87 threads the bilayer. At Asp-88–Leu-227 the chain is on the mitochondrial intermembrane side. Cu cation-binding residues include His-161, Cys-196, Glu-198, Cys-200, His-204, and Met-207. Residue Glu-198 coordinates Mg(2+).

The protein belongs to the cytochrome c oxidase subunit 2 family. Component of the cytochrome c oxidase (complex IV, CIV), a multisubunit enzyme composed of 14 subunits. The complex is composed of a catalytic core of 3 subunits MT-CO1, MT-CO2 and MT-CO3, encoded in the mitochondrial DNA, and 11 supernumerary subunits COX4I, COX5A, COX5B, COX6A, COX6B, COX6C, COX7A, COX7B, COX7C, COX8 and NDUFA4, which are encoded in the nuclear genome. The complex exists as a monomer or a dimer and forms supercomplexes (SCs) in the inner mitochondrial membrane with NADH-ubiquinone oxidoreductase (complex I, CI) and ubiquinol-cytochrome c oxidoreductase (cytochrome b-c1 complex, complex III, CIII), resulting in different assemblies (supercomplex SCI(1)III(2)IV(1) and megacomplex MCI(2)III(2)IV(2)). Found in a complex with TMEM177, COA6, COX18, COX20, SCO1 and SCO2. Interacts with TMEM177 in a COX20-dependent manner. Interacts with COX20. Interacts with COX16. The cofactor is Cu cation.

It is found in the mitochondrion inner membrane. The enzyme catalyses 4 Fe(II)-[cytochrome c] + O2 + 8 H(+)(in) = 4 Fe(III)-[cytochrome c] + 2 H2O + 4 H(+)(out). Functionally, component of the cytochrome c oxidase, the last enzyme in the mitochondrial electron transport chain which drives oxidative phosphorylation. The respiratory chain contains 3 multisubunit complexes succinate dehydrogenase (complex II, CII), ubiquinol-cytochrome c oxidoreductase (cytochrome b-c1 complex, complex III, CIII) and cytochrome c oxidase (complex IV, CIV), that cooperate to transfer electrons derived from NADH and succinate to molecular oxygen, creating an electrochemical gradient over the inner membrane that drives transmembrane transport and the ATP synthase. Cytochrome c oxidase is the component of the respiratory chain that catalyzes the reduction of oxygen to water. Electrons originating from reduced cytochrome c in the intermembrane space (IMS) are transferred via the dinuclear copper A center (CU(A)) of subunit 2 and heme A of subunit 1 to the active site in subunit 1, a binuclear center (BNC) formed by heme A3 and copper B (CU(B)). The BNC reduces molecular oxygen to 2 water molecules using 4 electrons from cytochrome c in the IMS and 4 protons from the mitochondrial matrix. This is Cytochrome c oxidase subunit 2 (MT-CO2) from Tupaia glis (Common tree shrew).